The following is a 486-amino-acid chain: Glycogen synthase (486 aa).

ADP-alpha-D-glucose is bound at residue Lys20.

The protein belongs to the glycosyltransferase 1 family. Bacterial/plant glycogen synthase subfamily.

It catalyses the reaction [(1-&gt;4)-alpha-D-glucosyl](n) + ADP-alpha-D-glucose = [(1-&gt;4)-alpha-D-glucosyl](n+1) + ADP + H(+). The protein operates within glycan biosynthesis; glycogen biosynthesis. In terms of biological role, synthesizes alpha-1,4-glucan chains using ADP-glucose. This Aeromonas salmonicida (strain A449) protein is Glycogen synthase.